The chain runs to 69 residues: U2-agatoxin-Ao1w (69 aa).

The N-terminal stretch at methionine 1–alanine 20 is a signal peptide. The propeptide occupies valine 21 to arginine 34. Cystine bridges form between cysteine 37/cysteine 53, cysteine 44/cysteine 58, and cysteine 52/cysteine 68.

It belongs to the neurotoxin 01 (U2-agtx) family. As to expression, expressed by the venom gland.

It localises to the secreted. Insect active toxin causing rapid but reversible paralysis in crickets. No activity shown in mammals. Does not show effect on mammalian voltage-gated calcium channels. This is U2-agatoxin-Ao1w from Agelena orientalis (Funnel-web spider).